We begin with the raw amino-acid sequence, 306 residues long: tRNA dimethylallyltransferase 2 (306 aa).

Residue 19 to 26 coordinates ATP; it reads GATASGKT. A substrate-binding site is contributed by 21-26; the sequence is TASGKT. The segment at 44–47 is interaction with substrate tRNA; sequence DSRQ.

It belongs to the IPP transferase family. As to quaternary structure, monomer. Mg(2+) is required as a cofactor.

It catalyses the reaction adenosine(37) in tRNA + dimethylallyl diphosphate = N(6)-dimethylallyladenosine(37) in tRNA + diphosphate. Functionally, catalyzes the transfer of a dimethylallyl group onto the adenine at position 37 in tRNAs that read codons beginning with uridine, leading to the formation of N6-(dimethylallyl)adenosine (i(6)A). The polypeptide is tRNA dimethylallyltransferase 2 (Citrifermentans bemidjiense (strain ATCC BAA-1014 / DSM 16622 / JCM 12645 / Bem) (Geobacter bemidjiensis)).